The sequence spans 358 residues: Zinc transporter ZIP1 (358 aa).

The Extracellular portion of the chain corresponds to 1–7 (MDLLFAK). The chain crosses the membrane as a helical span at residues 8-28 (IICIGIFLVVTTFGCFIPHLM). The Cytoplasmic portion of the chain corresponds to 29-53 (GLYKEKENEEKNKRVKNILSNLNCF). Residues 54–74 (GSGFIFSIIMFHLLPETIHII) form a helical membrane-spanning segment. Residues 75–91 (SDHGNIRIFNTSDSQMK) lie on the Extracellular side of the membrane. A helical transmembrane segment spans residues 92-112 (ILYIFFFVFIGFCMQLGLEYV). At 113-186 (LPVDTNICCV…GKFLEILTLQ (74 aa)) the chain is on the cytoplasmic side. The helical transmembrane segment at 187–207 (SFFLTISLAIHSCIEGMIIGT) threads the bilayer. At 208 to 213 (STDVNY) the chain is on the extracellular side. Residues 214-234 (VFISSFCILLHKWIAGVTVSL) traverse the membrane as a helical segment. Over 235–246 (SLNSNNMNKTLK) the chain is Cytoplasmic. The chain crosses the membrane as a helical span at residues 247-267 (AILLLTFVFASPLGIVLGHMA). Residues 268–273 (KSAGQK) are Extracellular-facing. A helical membrane pass occupies residues 274–294 (VTCLINAVSIGTLLFIGCEIL). The Cytoplasmic segment spans residues 295 to 310 (LNEIKQNISRKVRLCK). The helical transmembrane segment at 311–331 (WLSFCFSCLIAFALISFTTSM) threads the bilayer. Over 332-358 (APHTHGDIDTHVHVHHHDHDHDHGHNH) the chain is Extracellular.

Belongs to the ZIP transporter (TC 2.A.5) family. As to quaternary structure, homodimer.

It is found in the plastid. Its subcellular location is the apicoplast. The protein localises to the cell membrane. The enzyme catalyses Zn(2+)(in) = Zn(2+)(out). It carries out the reaction Fe(2+)(in) = Fe(2+)(out). In terms of biological role, transporter for the divalent zinc cation. Mediates the influx of zinc into cells from extracellular space. Can transport divalent iron ions. Does not transport manganese and cadmium cations. The sequence is that of Zinc transporter ZIP1 from Plasmodium falciparum (isolate 3D7).